The sequence spans 38 residues: Large ribosomal subunit protein bL36 (38 aa).

The protein belongs to the bacterial ribosomal protein bL36 family.

This chain is Large ribosomal subunit protein bL36, found in Lacticaseibacillus casei (strain BL23) (Lactobacillus casei).